The sequence spans 378 residues: uncharacterized protein (378 aa).

This is an uncharacterized protein from Escherichia coli (strain K12).